Here is a 302-residue protein sequence, read N- to C-terminus: Citrate lyase subunit beta (302 aa).

Substrate-binding residues include Arg-69 and Glu-132. Glu-132 and Asp-159 together coordinate Mg(2+).

This sequence belongs to the HpcH/HpaI aldolase family. Citrate lyase beta subunit subfamily. Oligomer with a subunit composition of (alpha,beta,gamma)6. Requires Mg(2+) as cofactor.

Its subcellular location is the cytoplasm. The enzyme catalyses citrate = oxaloacetate + acetate. The catalysed reaction is (3S)-citryl-CoA = oxaloacetate + acetyl-CoA. Functionally, represents a citryl-ACP lyase. The protein is Citrate lyase subunit beta (citE) of Leuconostoc mesenteroides subsp. cremoris.